The chain runs to 179 residues: Large ribosomal subunit protein uL5 (179 aa).

It belongs to the universal ribosomal protein uL5 family. In terms of assembly, part of the 50S ribosomal subunit; part of the 5S rRNA/L5/L18/L25 subcomplex. Contacts the 5S rRNA and the P site tRNA. Forms a bridge to the 30S subunit in the 70S ribosome.

This is one of the proteins that bind and probably mediate the attachment of the 5S RNA into the large ribosomal subunit, where it forms part of the central protuberance. In the 70S ribosome it contacts protein S13 of the 30S subunit (bridge B1b), connecting the 2 subunits; this bridge is implicated in subunit movement. Contacts the P site tRNA; the 5S rRNA and some of its associated proteins might help stabilize positioning of ribosome-bound tRNAs. The sequence is that of Large ribosomal subunit protein uL5 from Shewanella piezotolerans (strain WP3 / JCM 13877).